A 387-amino-acid chain; its full sequence is Anhydro-N-acetylmuramic acid kinase (387 aa).

17-24 (GTSMDGVD) is a binding site for ATP.

This sequence belongs to the anhydro-N-acetylmuramic acid kinase family.

The catalysed reaction is 1,6-anhydro-N-acetyl-beta-muramate + ATP + H2O = N-acetyl-D-muramate 6-phosphate + ADP + H(+). It participates in amino-sugar metabolism; 1,6-anhydro-N-acetylmuramate degradation. Its pathway is cell wall biogenesis; peptidoglycan recycling. In terms of biological role, catalyzes the specific phosphorylation of 1,6-anhydro-N-acetylmuramic acid (anhMurNAc) with the simultaneous cleavage of the 1,6-anhydro ring, generating MurNAc-6-P. Is required for the utilization of anhMurNAc either imported from the medium or derived from its own cell wall murein, and thus plays a role in cell wall recycling. This chain is Anhydro-N-acetylmuramic acid kinase, found in Burkholderia mallei (strain ATCC 23344).